The primary structure comprises 245 residues: MTLLISNDDGVYAPGLNALYHALKDLADVKVVAPDRNHSGASNALTLENPLRLQYLDNGFIAVSGTPTDCVHLALNKICITVPKLVVSGINHGANMGDDVLYSGTVAAAMEGRFLGLPAIAISLAGQTHFESAAFYAKQLVGKLLASPLSTDQVLNVNVPDLPLAQIKGIKITRLGKRHKAEMIEKSVDPRGKEIFWVGPPGKIAEAGDGTDFHAIENGYVSITPLKIDLTATEQLSDLTKWLDK.

Asp8, Asp9, Ser39, and Asn91 together coordinate a divalent metal cation.

Belongs to the SurE nucleotidase family. A divalent metal cation is required as a cofactor.

It localises to the cytoplasm. It carries out the reaction a ribonucleoside 5'-phosphate + H2O = a ribonucleoside + phosphate. Its function is as follows. Nucleotidase that shows phosphatase activity on nucleoside 5'-monophosphates. The sequence is that of 5'-nucleotidase SurE from Psychromonas ingrahamii (strain DSM 17664 / CCUG 51855 / 37).